The primary structure comprises 209 residues: Outer-membrane lipoprotein carrier protein (209 aa).

An N-terminal signal peptide occupies residues 1-24 (MTRYVISRLSAIALLALAPALALA).

This sequence belongs to the LolA family. As to quaternary structure, monomer.

The protein resides in the periplasm. Participates in the translocation of lipoproteins from the inner membrane to the outer membrane. Only forms a complex with a lipoprotein if the residue after the N-terminal Cys is not an aspartate (The Asp acts as a targeting signal to indicate that the lipoprotein should stay in the inner membrane). The chain is Outer-membrane lipoprotein carrier protein from Bordetella avium (strain 197N).